Consider the following 331-residue polypeptide: Glycerol-3-phosphate dehydrogenase [NAD(P)+] (331 aa).

NADPH contacts are provided by Trp-13, Arg-33, and Lys-103. Sn-glycerol 3-phosphate is bound by residues Lys-103, Gly-131, and Thr-133. Ala-135 lines the NADPH pocket. Sn-glycerol 3-phosphate is bound by residues Lys-187, Asp-240, Ser-250, Arg-251, and Asn-252. Lys-187 (proton acceptor) is an active-site residue. Position 251 (Arg-251) interacts with NADPH. The NADPH site is built by Val-275 and Glu-277.

This sequence belongs to the NAD-dependent glycerol-3-phosphate dehydrogenase family.

Its subcellular location is the cytoplasm. The enzyme catalyses sn-glycerol 3-phosphate + NAD(+) = dihydroxyacetone phosphate + NADH + H(+). It catalyses the reaction sn-glycerol 3-phosphate + NADP(+) = dihydroxyacetone phosphate + NADPH + H(+). It participates in membrane lipid metabolism; glycerophospholipid metabolism. Catalyzes the reduction of the glycolytic intermediate dihydroxyacetone phosphate (DHAP) to sn-glycerol 3-phosphate (G3P), the key precursor for phospholipid synthesis. This chain is Glycerol-3-phosphate dehydrogenase [NAD(P)+], found in Novosphingobium aromaticivorans (strain ATCC 700278 / DSM 12444 / CCUG 56034 / CIP 105152 / NBRC 16084 / F199).